The sequence spans 189 residues: Potassium-transporting ATPase KdpC subunit (189 aa).

The chain crosses the membrane as a helical span at residues 10–30; the sequence is LTLVFCVFFSVCYILVLWIFA.

It belongs to the KdpC family. In terms of assembly, the system is composed of three essential subunits: KdpA, KdpB and KdpC.

It localises to the cell inner membrane. Functionally, part of the high-affinity ATP-driven potassium transport (or Kdp) system, which catalyzes the hydrolysis of ATP coupled with the electrogenic transport of potassium into the cytoplasm. This subunit acts as a catalytic chaperone that increases the ATP-binding affinity of the ATP-hydrolyzing subunit KdpB by the formation of a transient KdpB/KdpC/ATP ternary complex. In Phocaeicola vulgatus (strain ATCC 8482 / DSM 1447 / JCM 5826 / CCUG 4940 / NBRC 14291 / NCTC 11154) (Bacteroides vulgatus), this protein is Potassium-transporting ATPase KdpC subunit.